The primary structure comprises 257 residues: Ditrans,polycis-undecaprenyl-diphosphate synthase ((2E,6E)-farnesyl-diphosphate specific) (257 aa).

Residue Asp34 is part of the active site. Residue Asp34 participates in Mg(2+) binding. Substrate contacts are provided by residues 35–38 (GNGR), Trp39, Arg47, and His51. Asn82 acts as the Proton acceptor in catalysis. Substrate-binding positions include Trp83, Arg85, Arg201, and 207–209 (RLS). Glu220 provides a ligand contact to Mg(2+).

Belongs to the UPP synthase family. Homodimer. Requires Mg(2+) as cofactor.

The enzyme catalyses 8 isopentenyl diphosphate + (2E,6E)-farnesyl diphosphate = di-trans,octa-cis-undecaprenyl diphosphate + 8 diphosphate. Its function is as follows. Catalyzes the sequential condensation of isopentenyl diphosphate (IPP) with (2E,6E)-farnesyl diphosphate (E,E-FPP) to yield (2Z,6Z,10Z,14Z,18Z,22Z,26Z,30Z,34E,38E)-undecaprenyl diphosphate (di-trans,octa-cis-UPP). UPP is the precursor of glycosyl carrier lipid in the biosynthesis of bacterial cell wall polysaccharide components such as peptidoglycan and lipopolysaccharide. In Francisella tularensis subsp. tularensis (strain SCHU S4 / Schu 4), this protein is Ditrans,polycis-undecaprenyl-diphosphate synthase ((2E,6E)-farnesyl-diphosphate specific).